We begin with the raw amino-acid sequence, 255 residues long: 4-diphosphocytidyl-2-C-methyl-D-erythritol kinase (255 aa).

Residue lysine 6 is part of the active site. 95 to 105 (PVCAGLGGGSS) contributes to the ATP binding site. Aspartate 137 is a catalytic residue.

The protein belongs to the GHMP kinase family. IspE subfamily.

The catalysed reaction is 4-CDP-2-C-methyl-D-erythritol + ATP = 4-CDP-2-C-methyl-D-erythritol 2-phosphate + ADP + H(+). It functions in the pathway isoprenoid biosynthesis; isopentenyl diphosphate biosynthesis via DXP pathway; isopentenyl diphosphate from 1-deoxy-D-xylulose 5-phosphate: step 3/6. Functionally, catalyzes the phosphorylation of the position 2 hydroxy group of 4-diphosphocytidyl-2C-methyl-D-erythritol. In Campylobacter jejuni subsp. jejuni serotype O:6 (strain 81116 / NCTC 11828), this protein is 4-diphosphocytidyl-2-C-methyl-D-erythritol kinase.